We begin with the raw amino-acid sequence, 128 residues long: Sm-like protein LSM1A (128 aa).

In terms of domain architecture, Sm spans Phe10–Glu85.

It belongs to the snRNP Sm proteins family. Component of the heptameric LSM1-LSM7 complex that forms a seven-membered ring structure with a donut shape. The LSM subunits are arranged in the order LSM1, LSM2, LSM3, LSM6, LSM5, LSM7 and LSM4. LSM1A subunit interacts only with its two neighboring subunits, LSM2 and LSM4. Expressed in roots, leaves, stems, flowers and siliques.

The protein resides in the cytoplasm. The protein localises to the P-body. Functionally, component of the cytoplasmic LSM1-LSM7 complex which is involved in mRNA degradation by promoting decapping and leading to accurate 5'-3' mRNA decay. LSM1A and LSM1B are essential for the formation of the cytoplasmic LSM1-LSM7 complex which regulates developmental gene expression by the decapping of specific development-related transcripts. Required for P-body formation during heat stress. The protein is Sm-like protein LSM1A of Arabidopsis thaliana (Mouse-ear cress).